The primary structure comprises 320 residues: Cytochrome f (320 aa).

The N-terminal stretch at methionine 1 to alanine 35 is a signal peptide. Heme is bound by residues tyrosine 36, cysteine 56, cysteine 59, and histidine 60. Residues valine 286–lysine 306 form a helical membrane-spanning segment.

Belongs to the cytochrome f family. As to quaternary structure, the 4 large subunits of the cytochrome b6-f complex are cytochrome b6, subunit IV (17 kDa polypeptide, petD), cytochrome f and the Rieske protein, while the 4 small subunits are PetG, PetL, PetM and PetN. The complex functions as a dimer. It depends on heme as a cofactor.

The protein localises to the plastid. It is found in the chloroplast thylakoid membrane. Component of the cytochrome b6-f complex, which mediates electron transfer between photosystem II (PSII) and photosystem I (PSI), cyclic electron flow around PSI, and state transitions. This is Cytochrome f from Hordeum vulgare (Barley).